Here is a 532-residue protein sequence, read N- to C-terminus: Methionine--tRNA ligase (532 aa).

The 'HIGH' region signature appears at 16-26 (YYVNDVPHLGS). Residues cysteine 131, cysteine 134, cysteine 149, and histidine 152 each contribute to the Zn(2+) site. Residues 305 to 309 (KMGKS) carry the 'KMSKS' region motif. Lysine 308 provides a ligand contact to ATP.

Belongs to the class-I aminoacyl-tRNA synthetase family. MetG type 2A subfamily. In terms of assembly, monomer. It depends on Zn(2+) as a cofactor.

It localises to the cytoplasm. The enzyme catalyses tRNA(Met) + L-methionine + ATP = L-methionyl-tRNA(Met) + AMP + diphosphate. Is required not only for elongation of protein synthesis but also for the initiation of all mRNA translation through initiator tRNA(fMet) aminoacylation. The polypeptide is Methionine--tRNA ligase (metG) (Synechocystis sp. (strain ATCC 27184 / PCC 6803 / Kazusa)).